The following is a 482-amino-acid chain: Protein DETOXIFICATION 13 (482 aa).

Helical transmembrane passes span 39–59, 77–97, 124–144, 159–179, 188–208, 218–238, 268–288, 297–317, 337–357, 381–401, 416–436, and 439–459; these read LICFAAPMAAVVIAQFMLQII, LASSFCNVTGFSFIVGLSCAL, LALVCLPLTLIWLNMETLLVF, AACLIPGLFAYAVLQPLTRYF, LLITSCFVFCLHVPLCWLLVY, ALALSFSNCLYTIILGSLMCF, AAMICLEWWSYELIILLSGLL, VLSVCLQTTATVYSIHLAIAA, IVVYAAMSLAVVEILILSTSL, MAPLVSISLILDGLQGVLSGI, LGAFYLWGIPIAASLAFWIHL, and VGLWIGIQAGAVLQTLLLTLV.

This sequence belongs to the multi antimicrobial extrusion (MATE) (TC 2.A.66.1) family.

The protein resides in the membrane. The sequence is that of Protein DETOXIFICATION 13 from Arabidopsis thaliana (Mouse-ear cress).